The following is a 1207-amino-acid chain: MVDVNRFKSMQITLASPSKVRSWSYGEVKKPETINYRTLKPEREGLFDEVIFGPTKDWECACGKYKRIRYKGIVCDRCGVEVTRAKVRRERMGHIELKAPVSHIWYFKGIPSRMGLTLDMSPRALEEVIYFAAYVVIDPKDTPLEPKSLLTEREYREKLQEYGHGSFVAKMGAEAIQDLLKRVDLAAEIAELKEELKSASGQKRIKAVRRLDVLDAFNKSGNKPEWMVLNILPVIPPDLRPMVQLDGGRFAASDLNDLYRRVINRNNRLARLLELNAPGIIVQNEKRMLQEAVDALIDNGRRGRPITGPGSRPLKSLSHMLKGKQGRFRQNLLGKRVDFSGRSVIAVGPTLKMYQCGVPREMAIELFKPFVMREIVAKEYAGNVKAAKRMVERGDERIWDILEEVIKEHPVLLNRAPTLHRLGIQAFEPVLIDGKALRLHPLVCEAYNADFDGDQMAIHVPLSEEAQAEARLLMLAAEHILNPKDGKPVVTPSQDMVLGNYYLTMEDAGREGEGMIFKDKDEAVMAYRNGYAHLHSRVGIAVDSMPNKPWKDSQRHKIMVTTVGKILFNDIMPEDLPYLQEPNNANLTEGTPDKYFLEPGQDIQEVIDGLDINVPFKKKNLGNIIAETFKRFRTTETSAFLDRLKDLGYYHSTLAGLTVGIADIPVIDNKAEIIDAAHHRVEEINKAFRRGLMTDDDRYVAVTTTWREAKEALEKRLIETQDPKNPIVMMMDSGARGNISNFSQLAGMRGLMAAPNGRIMELPILSNFREGLSVLEMFFSTHGARKGMTDTALKTADSGYLTRRLVDVAQDVIIREDDCGTDRGLLIRAITDGKEVTETLEVRLQGRYTRKSVKHPETGEVLIGADQLITEDMARKIVDAGVEEVTIRSVFTCATRHGVCRHCYGINLATGDAVEVGEAVGTIAAQSIGEPGTQLTMRTFHTGGVASNTDITQGLPRIQEIFEARNPKGEAVITEVKGNVVEIEEDASTRTKKVYVQGKTGMGEYVVPFTARMKVEVGDEVNRGAALTEGSIQPKRLLEVRDTLSVETYLLAEVQKVYRSQGVEIGDKHVEVMVRQMLRKVRVMDPGDTDLLPGTLMDISDFTDANKDIVISGGIPATSRPVLMGITKASLETNSFLSAASFQETTRVLTDAAIRGKKDHLLGLKENVIIGKIIPAGTGMARYRNIEPQAMNEIEVIDHTEVSAEAE.

Residues cysteine 60, cysteine 62, cysteine 75, and cysteine 78 each coordinate Zn(2+). Mg(2+) contacts are provided by aspartate 450, aspartate 452, and aspartate 454. Residues cysteine 819, cysteine 893, cysteine 900, and cysteine 903 each coordinate Zn(2+).

Belongs to the RNA polymerase beta' chain family. As to quaternary structure, the RNAP catalytic core consists of 2 alpha, 1 beta, 1 beta' and 1 omega subunit. When a sigma factor is associated with the core the holoenzyme is formed, which can initiate transcription. It depends on Mg(2+) as a cofactor. Requires Zn(2+) as cofactor.

It carries out the reaction RNA(n) + a ribonucleoside 5'-triphosphate = RNA(n+1) + diphosphate. DNA-dependent RNA polymerase catalyzes the transcription of DNA into RNA using the four ribonucleoside triphosphates as substrates. The polypeptide is DNA-directed RNA polymerase subunit beta' (Streptococcus pyogenes serotype M3 (strain ATCC BAA-595 / MGAS315)).